The chain runs to 103 residues: ATP synthase subunit H, mitochondrial (103 aa).

Residues 1–26 (MSRILKSLSRSYSTTSPRLYVDVVQG) constitute a mitochondrion transit peptide.

The protein belongs to the ATPase h subunit family. In terms of assembly, F-type ATPases have 2 components, CF(1) - the catalytic core - and CF(0) - the membrane proton channel.

Its subcellular location is the mitochondrion. The protein localises to the mitochondrion inner membrane. Its function is as follows. Mitochondrial membrane ATP synthase (F(1)F(0) ATP synthase or Complex V) produces ATP from ADP in the presence of a proton gradient across the membrane which is generated by electron transport complexes of the respiratory chain. F-type ATPases consist of two structural domains, F(1) - containing the extramembraneous catalytic core and F(0) - containing the membrane proton channel, linked together by a central stalk and a peripheral stalk. During catalysis, ATP synthesis in the catalytic domain of F(1) is coupled via a rotary mechanism of the central stalk subunits to proton translocation. Part of the complex F(0) domain. Minor subunit located with subunit a in the membrane. This Schizosaccharomyces pombe (strain 972 / ATCC 24843) (Fission yeast) protein is ATP synthase subunit H, mitochondrial (atp14).